Consider the following 398-residue polypeptide: S-adenosylmethionine decarboxylase proenzyme (398 aa).

Catalysis depends on residues glutamate 18 and glutamate 21. Serine 78 (schiff-base intermediate with substrate; via pyruvic acid) is an active-site residue. Residue serine 78 is modified to Pyruvic acid (Ser); by autocatalysis. Cysteine 92 functions as the Proton donor; for catalytic activity in the catalytic mechanism. Residues serine 243 and histidine 256 each act as proton acceptor; for processing activity in the active site.

This sequence belongs to the eukaryotic AdoMetDC family. The cofactor is pyruvate. Post-translationally, is synthesized initially as an inactive proenzyme. Formation of the active enzyme involves a self-maturation process in which the active site pyruvoyl group is generated from an internal serine residue via an autocatalytic post-translational modification. Two non-identical subunits are generated from the proenzyme in this reaction, and the pyruvate is formed at the N-terminus of the alpha chain, which is derived from the carboxyl end of the proenzyme. The post-translation cleavage follows an unusual pathway, termed non-hydrolytic serinolysis, in which the side chain hydroxyl group of the serine supplies its oxygen atom to form the C-terminus of the beta chain, while the remainder of the serine residue undergoes an oxidative deamination to produce ammonia and the pyruvoyl group blocking the N-terminus of the alpha chain.

The catalysed reaction is S-adenosyl-L-methionine + H(+) = S-adenosyl 3-(methylsulfanyl)propylamine + CO2. The protein operates within amine and polyamine biosynthesis; S-adenosylmethioninamine biosynthesis; S-adenosylmethioninamine from S-adenosyl-L-methionine: step 1/1. This Oryza sativa subsp. indica (Rice) protein is S-adenosylmethionine decarboxylase proenzyme (SAMDC).